Reading from the N-terminus, the 829-residue chain is Protein SEY1 homolog 2 (829 aa).

The segment at 1-21 (MDEVSPTKHFTSKPLLPTKTP) is disordered. The Cytoplasmic segment spans residues 1 to 728 (MDEVSPTKHF…EKENSEIKYQ (728 aa)). The region spanning 83–305 (GMDYNAVGIL…FLPQYNKEIP (223 aa)) is the GB1/RHD3-type G domain. 93–100 (GAQSSGKS) provides a ligand contact to GTP. Coiled coils occupy residues 372 to 396 (KKIMTKEIDTAIEKYKEVTERYMES) and 576 to 596 (DTIEEEIKKSKIDILNIIKEL). The helical transmembrane segment at 729-749 (IPLYLIVLVIFFGFDEFIAIL) threads the bilayer. Over 750–752 (TNP) the chain is Lumenal. A helical transmembrane segment spans residues 753 to 773 (LLFILTLIIGGGIYIGYKLNL). The Cytoplasmic portion of the chain corresponds to 774–829 (GGVAKNYIQYLLSMSLSSTMEYLRTIPFFTPLIDKIWPKDDNKDDDSTEETQEETK).

The protein belongs to the TRAFAC class dynamin-like GTPase superfamily. GB1/RHD3 GTPase family. RHD3 subfamily.

It is found in the endoplasmic reticulum membrane. Its function is as follows. Probable GTP-binding protein that may be involved in cell development. The protein is Protein SEY1 homolog 2 of Entamoeba dispar (strain ATCC PRA-260 / SAW760).